The chain runs to 373 residues: MPGWSCLVTGAGGFLGQRIIHLLVQEKDLEEVRLLDKVFRPETREEFFKLQTKTKVTVLEGDILDAQCLRRACQGISVVIHTAAAIDVWGIIPRQTIIDINVKGTLNLLEACVQASVPAFIYTSSIDVAGPNSYKEIVLNGHEEQQHESTWSDPYPYSKMMAEKAVLAANGSFLKNGGTLHTCALRPMYIYGEKSSILSGIMIRAIKNNGILKVTGKFSTVNPVYVSNAAWAHILAARGLQDPKKSPNIQGQFYYISDDTPHQSYDDLNNTLSKKWGLRPDSSWRPPVALLYWLGFLLELVNFLLRPVYNYQPPFTRYLVTISNTVFTFSYKKAQRDLGYEPLVGWEEARENTSEWIGSLVEQHKGTLNTKAQ.

The Proton acceptor role is filled by Tyr155. Lys159 provides a ligand contact to NAD(+). A helical transmembrane segment spans residues 288–308 (VALLYWLGFLLELVNFLLRPV).

It belongs to the 3-beta-HSD family. As to expression, high levels in adrenal gland, kidney and male liver. Low levels in female liver.

The protein localises to the endoplasmic reticulum membrane. The protein resides in the mitochondrion membrane. It catalyses the reaction a 3beta-hydroxy-Delta(5)-steroid + NAD(+) = a 3-oxo-Delta(5)-steroid + NADH + H(+). The catalysed reaction is a 3-oxo-Delta(5)-steroid = a 3-oxo-Delta(4)-steroid. It carries out the reaction pregnenolone + NAD(+) = pregn-5-ene-3,20-dione + NADH + H(+). The enzyme catalyses pregn-5-ene-3,20-dione = progesterone. It catalyses the reaction 3beta-hydroxyandrost-5-en-17-one + NAD(+) = androst-5-ene-3,17-dione + NADH + H(+). The catalysed reaction is androst-5-ene-3,17-dione = androst-4-ene-3,17-dione. It participates in lipid metabolism; steroid biosynthesis. 3-beta-HSD is a bifunctional enzyme, that catalyzes the oxidative conversion of Delta(5)-ene-3-beta-hydroxy steroid, and the oxidative conversion of ketosteroids. The 3-beta-HSD enzymatic system plays a crucial role in the biosynthesis of all classes of hormonal steroids. The chain is 3 beta-hydroxysteroid dehydrogenase/Delta 5--&gt;4-isomerase type 2 (HSD3B2) from Mesocricetus auratus (Golden hamster).